The following is a 389-amino-acid chain: Trans-2-enoyl-CoA reductase [NADH] (389 aa).

Residues 47–52 (GASTGY), 73–74 (FE), 110–111 (DA), and 138–139 (LA) contribute to the NAD(+) site. Substrate is bound at residue tyrosine 224. Tyrosine 234 (proton donor) is an active-site residue. NAD(+) contacts are provided by residues lysine 243 and 272–274 (LVT).

The protein belongs to the TER reductase family. As to quaternary structure, monomer.

It carries out the reaction a 2,3-saturated acyl-CoA + NAD(+) = a (2E)-enoyl-CoA + NADH + H(+). It functions in the pathway lipid metabolism; fatty acid biosynthesis. In terms of biological role, involved in the fatty acid synthesis (FAS II). Catalyzes the reduction of a carbon-carbon double bond in an enoyl moiety that is covalently linked to a coenzyme A (CoA). The chain is Trans-2-enoyl-CoA reductase [NADH] from Clostridium perfringens (strain ATCC 13124 / DSM 756 / JCM 1290 / NCIMB 6125 / NCTC 8237 / Type A).